A 364-amino-acid chain; its full sequence is MIIEELHIVNFKSIAAADCRFSPKVNCLVGNNGMGKTNLLDALHFLSFCRSHLSVPDNMVVRHGEEMALLQGLYRDESGDGIELLLSIRPGKHKVLRRNKKEYERLSDHIGRFPLVIVSPQDYQLILGGSDERRRFMDQQLCQQDPRYLSALIQYNRHLQQRNTMLKQDRHDDALMDVLELQMGSYAAEICNKRSRFIEDFLPVFNDLYSDISGSAEKVSLSYRSHLADGIPLEELLRRSRPKDYLLGFSSCGVHKDELEMLLGGVLIRKIGSEGQNKTFLISMKLAQFRHQQLHGDETPILLLDDIFDKLDATRVERIIRLVGGNGFGQIFITDTNRKNLDEIIASWSEDYRLFKIENGQIFQ.

Residue 30–37 participates in ATP binding; the sequence is GNNGMGKT.

This sequence belongs to the RecF family.

The protein resides in the cytoplasm. Its function is as follows. The RecF protein is involved in DNA metabolism; it is required for DNA replication and normal SOS inducibility. RecF binds preferentially to single-stranded, linear DNA. It also seems to bind ATP. This is DNA replication and repair protein RecF from Porphyromonas gingivalis (strain ATCC BAA-308 / W83).